The primary structure comprises 406 residues: Kelch domain-containing protein 2 (406 aa).

Kelch repeat units follow at residues 31–85 (ERSG…NTEG), 92–136 (SGSC…ERID), 148–207 (LGVW…AWSQ), 221–259 (HACA…NELI), 271–311 (HSLT…IQFN), and 322–359 (HTAC…IFSV).

Component of a CRL2(KLHDC2) E3 ubiquitin-protein ligase complex, also named ECS(KLHDC2) complex, composed of CUL2, Elongin BC (ELOB and ELOC), RBX1 and substrate-specific adapter KLHDC2. May form oligomers as a KLHDC2-ELOB-ELOC complex; this interaction is autoinhibitory for the E3 ligase complex as the substrate-binding site of KLHDC2 is blocked in the oligomer. Interacts with CREB3; interaction is direct and specific as it does not interact with CREB1, ATF4, ATF6, JUN, FOS, CEBPA or herpes simplex virus transactivator VP16. Autoubiquitinated by the CRL2(KLHDC2) E3 ligase complex.

It is found in the nucleus. It functions in the pathway protein modification; protein ubiquitination. Functionally, substrate-recognition component of a Cul2-RING (CRL2) E3 ubiquitin-protein ligase complex of the DesCEND (destruction via C-end degrons) pathway, which recognizes a C-degron located at the extreme C terminus of target proteins, leading to their ubiquitination and degradation. The C-degron recognized by the DesCEND pathway is usually a motif of less than ten residues and can be present in full-length proteins, truncated proteins or proteolytically cleaved forms. The CRL2(KLHDC2) complex specifically recognizes proteins with a diglycine (Gly-Gly) at the C-terminus, leading to their ubiquitination and degradation. The CRL2(KLHDC2) complex mediates ubiquitination and degradation of truncated SELENOK and SELENOS selenoproteins produced by failed UGA/Sec decoding, which end with a diglycine. The CRL2(KLHDC2) complex also recognizes proteolytically cleaved proteins ending with Gly-Gly, such as the N-terminal fragment of USP1, leading to their degradation. May also act as an indirect repressor of CREB3-mediated transcription by interfering with CREB3-DNA-binding. This chain is Kelch domain-containing protein 2, found in Rattus norvegicus (Rat).